The primary structure comprises 154 residues: Endoribonuclease YbeY (154 aa).

Positions 117, 121, and 127 each coordinate Zn(2+).

Belongs to the endoribonuclease YbeY family. Requires Zn(2+) as cofactor.

The protein localises to the cytoplasm. Functionally, single strand-specific metallo-endoribonuclease involved in late-stage 70S ribosome quality control and in maturation of the 3' terminus of the 16S rRNA. This chain is Endoribonuclease YbeY, found in Polaromonas sp. (strain JS666 / ATCC BAA-500).